A 109-amino-acid polypeptide reads, in one-letter code: Parvalbumin beta (109 aa).

S1 carries the N-acetylserine modification. 2 consecutive EF-hand domains span residues 38-73 (KTPDVIKKAFYVIDQDKSGFIEEDELKLFLQNFASS) and 77-109 (LTDKETETFLKAGDSDGDGKIGIDEFADLVKEA). 11 residues coordinate Ca(2+): D51, D53, S55, F57, E59, E62, D90, D92, D94, K96, and E101.

This sequence belongs to the parvalbumin family.

Functionally, in muscle, parvalbumin is thought to be involved in relaxation after contraction. It binds two calcium ions. This Opsanus tau (Oyster toadfish) protein is Parvalbumin beta.